We begin with the raw amino-acid sequence, 256 residues long: uncharacterized protein (256 aa).

Residues 187 to 223 are a coiled coil; the sequence is MEEEEISEVEDALNVLQRLCAQEEGDNKEAETNNNNY.

This is an uncharacterized protein from Ostreid herpesvirus 1 (isolate France) (OsHV-1).